Here is a 513-residue protein sequence, read N- to C-terminus: Laccase (513 aa).

4 Plastocyanin-like domains span residues 45 to 81 (PTRL…STHF), 101 to 178 (KTVV…HDPK), 240 to 318 (WPYL…ILAN), and 378 to 509 (QDEY…MDIT). Cu cation is bound by residues H105, H107, H153, and H155. Cu cation-binding residues include H419, H422, H424, H491, C492, H493, H497, and M502.

Belongs to the multicopper oxidase family. Monomer. Cu(2+) serves as cofactor.

It localises to the spore coat. It catalyses the reaction 4 hydroquinone + O2 = 4 benzosemiquinone + 2 H2O. It carries out the reaction 2 (4Z,15Z)-bilirubin IXalpha + O2 = 2 biliverdin IXalpha + 2 H2O. With respect to regulation, inhibited by azide. Its function is as follows. Multicopper oxidase that catalyzes the oxidation of a variety of substrates, including phenolic and non-phenolic compounds. Substrates include syringaldazine (SGZ), 2,6-dimethoxyphenol (2,6-DMP) and the non-phenolic compound 2,2'-azino-bis(3-ethylbenzothiazoline-6-sulfonic acid) (ABTS). Has no tyrosinase activity. Is implicated in the biosynthesis of a brownish pigment that characterizes sporulating colonies of B.subtilis, and which appears to be a melanin-like product and to confer protection against UV light. In terms of biological role, in vitro, also shows strong bilirubin oxidase (BOD) activity, and can catalyze the oxidation of free bilirubin (UB), direct bilirubin (conjugated with glucuronic acid, DB) and ditaurobilirubin. In Bacillus subtilis (strain 168), this protein is Laccase.